We begin with the raw amino-acid sequence, 221 residues long: uncharacterized protein (221 aa).

The next 5 membrane-spanning stretches (helical) occupy residues 2–22 (FIAK…FFFV), 34–54 (LLTL…LAQA), 97–117 (AYGL…SNVI), 131–151 (ALDQ…FMGI), and 177–197 (ILWP…LQVI).

Belongs to the peroxisomal membrane protein PXMP2/4 family.

The protein resides in the membrane. This is an uncharacterized protein from Schizosaccharomyces pombe (strain 972 / ATCC 24843) (Fission yeast).